The primary structure comprises 410 residues: 2-hydroxy-5-methyl-1-naphthoate 7-hydroxylase (410 aa).

Cysteine 350 is a heme binding site.

The protein belongs to the cytochrome P450 family. Heme is required as a cofactor.

It catalyses the reaction 2-hydroxy-5-methyl-1-naphthoate + 2 reduced [2Fe-2S]-[ferredoxin] + O2 + 2 H(+) = 2,7-dihydroxy-5-methyl-1-naphthoate + 2 oxidized [2Fe-2S]-[ferredoxin] + H2O. Its pathway is antibiotic biosynthesis. In terms of biological role, involved in the biosynthesis of the naphthoic acid (NA) moiety in the chromophore of the enedyine antitumor antibiotic neocarzinostatin (NCS). Catalyzes the hydroxylation at C-7 position of 2-hydroxy-5-methyl-1-naphthoate to yield 2,7-dihydroxy-5-methyl-1-naphthoate. In Streptomyces carzinostaticus, this protein is 2-hydroxy-5-methyl-1-naphthoate 7-hydroxylase.